Consider the following 1132-residue polypeptide: Serine/threonine-protein kinase spk-1 (1132 aa).

Residues 75 to 95 (GGSLILTDIFPTVLFMFVVLF) traverse the membrane as a helical segment. Disordered regions lie at residues 240-388 (NEDQ…DSDD) and 419-481 (NKKA…KRGG). 2 stretches are compositionally biased toward acidic residues: residues 281–290 (SEDEDVESQE) and 311–336 (DEPI…LGDE). Positions 362–372 (DSSVSSSTSST) are enriched in low complexity. The segment covering 373 to 388 (PDDDEDDSATSYDSDD) has biased composition (acidic residues). Basic and acidic residues predominate over residues 421–433 (KAEVNANEERMDD). Residues 434–443 (VSVSPGRSDS) show a composition bias toward low complexity. In terms of domain architecture, Protein kinase spans 495–1044 (YHVIRKLGWG…ANDALKHPFL (550 aa)). Residues 501 to 509 (LGWGHFSTV) and lysine 524 each bind ATP. Aspartate 628 (proton acceptor) is an active-site residue. The disordered stretch occupies residues 1066-1121 (QVPEALDGNQEVYRDENDSNSASERSANRSAGSDDEEEFHMDRPGPSGVINEPADV). A compositionally biased stretch (low complexity) spans 1084-1096 (SNSASERSANRSA).

This sequence belongs to the protein kinase superfamily. Ser/Thr protein kinase family.

It is found in the membrane. It carries out the reaction L-seryl-[protein] + ATP = O-phospho-L-seryl-[protein] + ADP + H(+). The enzyme catalyses L-threonyl-[protein] + ATP = O-phospho-L-threonyl-[protein] + ADP + H(+). Its function is as follows. Required for embryogenesis and germline development in both adult hermaphrodites and males. SR-protein kinase (SRPK) that binds directly to and phosphorylates RS domains. This is Serine/threonine-protein kinase spk-1 (spk-1) from Caenorhabditis briggsae.